The sequence spans 919 residues: Calcium-transporting ATPase type 2C member 1 (919 aa).

The Cytoplasmic segment spans residues 1–70; it reads MKVARFQKIP…NEFDISEDEP (70 aa). A helical membrane pass occupies residues 71-91; it reads LWKKYISQFKNPLIMLLLASA. The Lumenal segment spans residues 92–104; the sequence is VISVLMHQFDDAV. A helical transmembrane segment spans residues 105–123; it reads SITVAILIVVTVAFVQEYR. Residues 124 to 262 lie on the Cytoplasmic side of the membrane; it reads SEKSLEELSK…APKTPLQKSM (139 aa). The helical transmembrane segment at 263 to 282 threads the bilayer; sequence DLLGKQLSFYSFGIIGIIML. At 283-294 the chain is on the lumenal side; sequence VGWLLGKDILEM. A helical membrane pass occupies residues 295–312; sequence FTISVSLAVAAIPEGLPI. Val-303, Ala-304, Ile-306, and Glu-308 together coordinate Ca(2+). Residues 313–699 lie on the Cytoplasmic side of the membrane; that stretch reads VVTVTLALGV…EEGKGIYNNI (387 aa). Residue Asp-350 is the 4-aspartylphosphate intermediate of the active site. Residues Asp-644 and Asp-648 each coordinate Mg(2+). A helical membrane pass occupies residues 700-719; sequence KNFVRFQLSTSIAALTLISL. At 720–729 the chain is on the lumenal side; the sequence is ATLMNFPNPL. A helical membrane pass occupies residues 730 to 750; sequence NAMQILWINIIMDGPPAQSLG. Positions 738 and 742 each coordinate Ca(2+). Topologically, residues 751-770 are cytoplasmic; the sequence is VEPVDKDVIRKPPRNWKDSI. Residues 771–793 form a helical membrane-spanning segment; that stretch reads LTKNLILKILVSSIIIVCGTLFV. At 794 to 808 the chain is on the lumenal side; that stretch reads FWRELRDNVITPRDT. The helical transmembrane segment at 809-828 threads the bilayer; the sequence is TMTFTCFVFFDMFNALSSRS. The Cytoplasmic segment spans residues 829–841; that stretch reads QTKSVFEIGLCSN. A helical transmembrane segment spans residues 842–860; sequence RMFCYAVLGSIMGQLLVIY. Residues 861–875 are Lumenal-facing; that stretch reads FPPLQKVFQTESLSI. The chain crosses the membrane as a helical span at residues 876 to 896; sequence LDLLFLLGLTSSVCIVAEIIK. At 897-919 the chain is on the cytoplasmic side; that stretch reads KVERSREKIQKHVSSTSSSFLEV.

This sequence belongs to the cation transport ATPase (P-type) (TC 3.A.3) family. Type IIA subfamily. As to quaternary structure, monomer. Homodimer. In terms of tissue distribution, found in most tissues except colon, thymus, spleen and leukocytes. Expressed in keratinocytes (at protein level).

It is found in the golgi apparatus. The protein localises to the trans-Golgi network membrane. Its subcellular location is the golgi stack membrane. It carries out the reaction Ca(2+)(in) + ATP + H2O = Ca(2+)(out) + ADP + phosphate + H(+). The catalysed reaction is Mn(2+)(in) + ATP + H2O = Mn(2+)(out) + ADP + phosphate + H(+). Its function is as follows. ATP-driven pump that supplies the Golgi apparatus with Ca(2+) and Mn(2+) ions, both essential cofactors for processing and trafficking of newly synthesized proteins in the secretory pathway. Within a catalytic cycle, acquires Ca(2+) or Mn(2+) ions on the cytoplasmic side of the membrane and delivers them to the lumenal side. The transfer of ions across the membrane is coupled to ATP hydrolysis and is associated with a transient phosphorylation that shifts the pump conformation from inward-facing to outward-facing state. Plays a primary role in the maintenance of Ca(2+) homeostasis in the trans-Golgi compartment with a functional impact on Golgi and post-Golgi protein sorting as well as a structural impact on cisternae morphology. Responsible for loading the Golgi stores with Ca(2+) ions in keratinocytes, contributing to keratinocyte differentiation and epidermis integrity. Participates in Ca(2+) and Mn(2+) ions uptake into the Golgi store of hippocampal neurons and regulates protein trafficking required for neural polarity. May also play a role in the maintenance of Ca(2+) and Mn(2+) homeostasis and signaling in the cytosol while preventing cytotoxicity. In Homo sapiens (Human), this protein is Calcium-transporting ATPase type 2C member 1.